The following is a 367-amino-acid chain: Protein-glutamate methylesterase/protein-glutamine glutaminase 2 (367 aa).

The region spanning 3-120 is the Response regulatory domain; sequence SVVVVDDSAF…SLDIVRIEND (118 aa). A 4-aspartylphosphate modification is found at Asp-54. Residues 132-174 are disordered; the sequence is RMLRTPRPVRPAPTASAPAQTAQVASAAPATAPSRPAMPATRA. Positions 143-174 are enriched in low complexity; that stretch reads APTASAPAQTAQVASAAPATAPSRPAMPATRA. One can recognise a CheB-type methylesterase domain in the interval 175 to 367; the sequence is SRPVRDVVAI…AAAIMNGLYK (193 aa). Residues Ser-187, His-214, and Asp-310 contribute to the active site.

It belongs to the CheB family. Phosphorylated by CheA. Phosphorylation of the N-terminal regulatory domain activates the methylesterase activity.

It localises to the cytoplasm. The catalysed reaction is [protein]-L-glutamate 5-O-methyl ester + H2O = L-glutamyl-[protein] + methanol + H(+). It catalyses the reaction L-glutaminyl-[protein] + H2O = L-glutamyl-[protein] + NH4(+). Involved in chemotaxis. Part of a chemotaxis signal transduction system that modulates chemotaxis in response to various stimuli. Catalyzes the demethylation of specific methylglutamate residues introduced into the chemoreceptors (methyl-accepting chemotaxis proteins or MCP) by CheR. Also mediates the irreversible deamidation of specific glutamine residues to glutamic acid. This is Protein-glutamate methylesterase/protein-glutamine glutaminase 2 from Nitratidesulfovibrio vulgaris (strain ATCC 29579 / DSM 644 / CCUG 34227 / NCIMB 8303 / VKM B-1760 / Hildenborough) (Desulfovibrio vulgaris).